The primary structure comprises 453 residues: MAQRYDEMVHYPGLDGMPLAGFGDAHTGRALQHHSLSQSAPYGSTGAAHRVPMPPGMGSNDGLKREKDEIYGHPLFPLLALVFEKCELATCSPRDNSGSFPGGDVCSSDSFNEDIAVFAKQVRTEKPLFSSNPELDSLMIQAIQVLRFHLLELEKVHDLCDNFCHRYITCLKGKMPIDLVIDDRDGSSKSDLEDFTGSCTSLSDQNNSWIRDHDETGSTHSGTPGPSSGGLASQSGDNSSEQGDCMDNSVASPSTGDDDDLDRDKKRNKKRGIFPKVATNIMRAWLFQHLSHPYPSEEQKKQLAQDTGLTILQVNNWFINARRRIVQPMIDQSNRTGQGGAPYSPDGQNMGGYVMDGQQHMGIRPPGFQGIPGDYTAAPSTMPMGFPPAGYTPAIPPHSAGLRHGPSLHSYLPGHPHHASMILPAGASPHHLVSAQSPADALLNGQNIDIHAH.

The disordered stretch occupies residues 33 to 64 (HHSLSQSAPYGSTGAAHRVPMPPGMGSNDGLK). Positions 102-185 (GGDVCSSDSF…PIDLVIDDRD (84 aa)) constitute an MEIS N-terminal domain. Residues 192 to 272 (LEDFTGSCTS…RDKKRNKKRG (81 aa)) form a disordered region. A compositionally biased stretch (polar residues) spans 197-209 (GSCTSLSDQNNSW). Positions 218 to 230 (STHSGTPGPSSGG) are enriched in low complexity. The segment covering 231-242 (LASQSGDNSSEQ) has biased composition (polar residues). Positions 267–329 (RNKKRGIFPK…NARRRIVQPM (63 aa)) form a DNA-binding region, homeobox.

It belongs to the TALE/MEIS homeobox family.

It is found in the nucleus. Its function is as follows. A caudalizing protein which is required to pattern the anterior/posterior (A/P) axis during central nervous system (CNS) formation. Inhibits anterior neural expression and acts as a transcriptional activator to induce posterior neural gene expression. Maintains a proper A/P balance required for hindbrain formation by activating the FGF/MAPK pathway, which modulates the planar cell polarity (PCP) pathway. Interacts with retinoid signaling during hindbrain patterning. This chain is Homeobox protein meis3, found in Xenopus tropicalis (Western clawed frog).